A 297-amino-acid polypeptide reads, in one-letter code: GTP cyclohydrolase FolE2 (297 aa).

Disordered stretches follow at residues 1 to 21 and 180 to 207; these read MTHA…SERD and IRAE…RERP.

It belongs to the GTP cyclohydrolase IV family.

The enzyme catalyses GTP + H2O = 7,8-dihydroneopterin 3'-triphosphate + formate + H(+). It functions in the pathway cofactor biosynthesis; 7,8-dihydroneopterin triphosphate biosynthesis; 7,8-dihydroneopterin triphosphate from GTP: step 1/1. Converts GTP to 7,8-dihydroneopterin triphosphate. The chain is GTP cyclohydrolase FolE2 from Methylibium petroleiphilum (strain ATCC BAA-1232 / LMG 22953 / PM1).